The sequence spans 131 residues: Small ribosomal subunit protein uS11 (131 aa).

It belongs to the universal ribosomal protein uS11 family. As to quaternary structure, part of the 30S ribosomal subunit. Interacts with proteins S7 and S18. Binds to IF-3.

Functionally, located on the platform of the 30S subunit, it bridges several disparate RNA helices of the 16S rRNA. Forms part of the Shine-Dalgarno cleft in the 70S ribosome. The polypeptide is Small ribosomal subunit protein uS11 (Clostridium novyi (strain NT)).